Here is a 156-residue protein sequence, read N- to C-terminus: Protein-export protein SecB (156 aa).

Belongs to the SecB family. In terms of assembly, homotetramer, a dimer of dimers. One homotetramer interacts with 1 SecA dimer.

It is found in the cytoplasm. Its function is as follows. One of the proteins required for the normal export of preproteins out of the cell cytoplasm. It is a molecular chaperone that binds to a subset of precursor proteins, maintaining them in a translocation-competent state. It also specifically binds to its receptor SecA. The polypeptide is Protein-export protein SecB (Yersinia enterocolitica serotype O:8 / biotype 1B (strain NCTC 13174 / 8081)).